A 290-amino-acid polypeptide reads, in one-letter code: Ribosomal RNA small subunit methyltransferase A (290 aa).

Residues N28, L30, G55, E76, D102, and N126 each coordinate S-adenosyl-L-methionine.

It belongs to the class I-like SAM-binding methyltransferase superfamily. rRNA adenine N(6)-methyltransferase family. RsmA subfamily.

It localises to the cytoplasm. It carries out the reaction adenosine(1518)/adenosine(1519) in 16S rRNA + 4 S-adenosyl-L-methionine = N(6)-dimethyladenosine(1518)/N(6)-dimethyladenosine(1519) in 16S rRNA + 4 S-adenosyl-L-homocysteine + 4 H(+). Specifically dimethylates two adjacent adenosines (A1518 and A1519) in the loop of a conserved hairpin near the 3'-end of 16S rRNA in the 30S particle. May play a critical role in biogenesis of 30S subunits. This chain is Ribosomal RNA small subunit methyltransferase A, found in Lachnoclostridium phytofermentans (strain ATCC 700394 / DSM 18823 / ISDg) (Clostridium phytofermentans).